The primary structure comprises 32 residues: Dermatoxin-J3 (32 aa).

The residue at position 32 (Gln32) is a Glutamine amide.

In terms of tissue distribution, expressed by the skin glands.

It localises to the secreted. Functionally, antimicrobial peptide. The polypeptide is Dermatoxin-J3 (Phasmahyla jandaia (Jandaia leaf frog)).